We begin with the raw amino-acid sequence, 257 residues long: 4-chloro-allylglycine synthase (257 aa).

Fe cation-binding residues include Glu-112, His-119, Glu-173, His-203, Glu-207, and His-210.

Fe(2+) serves as cofactor.

The catalysed reaction is 4-chloro-L-lysine + AH2 + O2 = L-2-amino-4-chloropent-4-enoate + formaldehyde + A + NH4(+) + H2O. It participates in amino-acid metabolism. The protein operates within antibiotic biosynthesis. Functionally, involved in the biosynthesis of terminal alkyne-containing amino acids such as L-propargylglycine (Pra) and L-beta-ethynylserine, that are produced as antibiotics by S.cattleya. Catalyzes an oxidative C-C bond cleavage in 4-chloro-L-lysine to form 4-chloro-allyl-L-glycine (also named L-2-amino-4-chloropent-4-enoate), with release of formaldehyde and ammonia. Is also able to react with L-lysine directly to produce allylglycine in vitro. The sequence is that of 4-chloro-allylglycine synthase from Streptantibioticus cattleyicolor (strain ATCC 35852 / DSM 46488 / JCM 4925 / NBRC 14057 / NRRL 8057) (Streptomyces cattleya).